A 348-amino-acid chain; its full sequence is Anthranilate phosphoribosyltransferase (348 aa).

5-phospho-alpha-D-ribose 1-diphosphate-binding positions include glycine 81, glycine 84 to aspartate 85, threonine 89, asparagine 91 to threonine 94, lysine 109 to serine 117, and serine 121. Anthranilate is bound at residue glycine 81. Serine 93 contributes to the Mg(2+) binding site. Anthranilate is bound at residue asparagine 112. Arginine 167 provides a ligand contact to anthranilate. Aspartate 226 and glutamate 227 together coordinate Mg(2+).

Belongs to the anthranilate phosphoribosyltransferase family. Homodimer. The cofactor is Mg(2+).

The enzyme catalyses N-(5-phospho-beta-D-ribosyl)anthranilate + diphosphate = 5-phospho-alpha-D-ribose 1-diphosphate + anthranilate. It participates in amino-acid biosynthesis; L-tryptophan biosynthesis; L-tryptophan from chorismate: step 2/5. Its function is as follows. Catalyzes the transfer of the phosphoribosyl group of 5-phosphorylribose-1-pyrophosphate (PRPP) to anthranilate to yield N-(5'-phosphoribosyl)-anthranilate (PRA). The sequence is that of Anthranilate phosphoribosyltransferase from Thermomicrobium roseum (strain ATCC 27502 / DSM 5159 / P-2).